We begin with the raw amino-acid sequence, 426 residues long: MNNLKNLRGTVDLLPDQLIKWQNVEKIVLEQLARASIKEIRTPILEMTELFIRGIGEGTDVVSKEMYTFLDRGERSCTLRPEGTASVARALIQNGISSNPFQKLWYMGPMFRYERPQAGRQRQFHQLGVEFIGYESVRSDVEIIALAWDILGKLGIKELNLEINSLGDIDDRLNFQKSFLKWLEKNKDSLDLDSQNRINKNPLRILDSKNMQTKKALENAPILFNFLSEKSHKRYSDLKKQLNVLQIPYVENFNLVRGLDYYTHTAFEITSCALGSQATVCGGGRYDNLIKQMGGPNTPAIGFAIGLERLILLAGKDLEVPRNTDIYIINQGLIAESLAMDLSRKLRNYDLLVELDLSGASFSKQFKKANKLKSKSIIVIGDDEAANKEFIIRLFDHSGNANKEEVISFENDIKLEKWLKINLLSK.

The protein belongs to the class-II aminoacyl-tRNA synthetase family. In terms of assembly, homodimer.

Its subcellular location is the cytoplasm. The catalysed reaction is tRNA(His) + L-histidine + ATP = L-histidyl-tRNA(His) + AMP + diphosphate + H(+). The protein is Histidine--tRNA ligase of Prochlorococcus marinus (strain MIT 9312).